The primary structure comprises 550 residues: Protein UshA (550 aa).

An N-terminal signal peptide occupies residues 1–25; the sequence is MKLLQRGVALALLTTFTLASETALA. Zn(2+) contacts are provided by Asp-41, His-43, Asp-84, Asn-116, His-217, His-252, and Gln-254. A disulfide bridge connects residues Cys-258 and Cys-275. Substrate is bound by residues 375–379 and 498–504; these read RDKVR and FNATGGD.

It belongs to the 5'-nucleotidase family. Monomer. Zn(2+) serves as cofactor.

It is found in the periplasm. It carries out the reaction UDP-sugar + H2O = UMP + alpha-D-aldose 1-phosphate.. The enzyme catalyses a ribonucleoside 5'-phosphate + H2O = a ribonucleoside + phosphate. With respect to regulation, the activity of this protein is inhibited by an intracellular protein inhibitor. Functionally, degradation of external UDP-glucose to uridine monophosphate and glucose-1-phosphate, which can then be used by the cell. This chain is Protein UshA (ushA), found in Escherichia coli (strain K12).